The sequence spans 482 residues: Lipoamide acyltransferase component of branched-chain alpha-keto acid dehydrogenase complex, mitochondrial (482 aa).

Residues 1–61 (MAAALVLRTW…QWLKTTAALQ (61 aa)) constitute a mitochondrion transit peptide. The 76-residue stretch at 64-139 (IVQFKLSDIG…YVGKPLVDIE (76 aa)) folds into the Lipoyl-binding domain. The residue at position 105 (Lys105) is an N6-lipoyllysine. Residue Lys133 is modified to N6-succinyllysine. The tract at residues 145–160 (DSEEDVVETPAVSHDE) is critical for association with PPM1K. The tract at residues 146–171 (SEEDVVETPAVSHDEHTHQEIKGQKT) is disordered. Basic and acidic residues predominate over residues 157 to 168 (SHDEHTHQEIKG). In terms of domain architecture, Peripheral subunit-binding (PSBD) spans 172 to 209 (LATPAVRRLAMENNIKLSEVIGSGKDGRILKEDILNYL). An N6-acetyllysine; alternate modification is found at Lys196. The residue at position 196 (Lys196) is an N6-succinyllysine; alternate. Lys202 is modified (N6-acetyllysine). A compositionally biased stretch (pro residues) spans 218-230 (PPSPKAEIMPPPP). A disordered region spans residues 218–238 (PPSPKAEIMPPPPKPKDRTIP). Ser220 carries the phosphoserine modification. N6-acetyllysine occurs at positions 243 and 250. Lys261 carries the N6-succinyllysine modification. The residue at position 289 (Lys289) is an N6-acetyllysine; alternate. Lys289 is subject to N6-succinyllysine; alternate. Residue Arg291 coordinates CoA. Residues Lys295 and Lys304 each carry the N6-acetyllysine modification. Residues Ser306, Asp349, Gln378, Ser399, Asn400, Ser403, Gly424, and Ile426 each coordinate CoA. N6-acetyllysine is present on Lys435. Lys440 carries the N6-acetyllysine; alternate modification. An N6-succinyllysine; alternate modification is found at Lys440. Catalysis depends on residues His452 and Asp456.

The protein belongs to the 2-oxoacid dehydrogenase family. As to quaternary structure, forms a 24-polypeptide structural core with octahedral symmetry that represents the E2 component of the branched-chain alpha-ketoacid dehydrogenase (BCKDH) complex. The BCKDH complex is composed of three major building blocks E1, E2 and E3. It is organized around E2, a 24-meric cubic core composed of DBT, to which are associated 6 to 12 copies of E1, and approximately 6 copies of the dehydrogenase E3, a DLD dimer. Interacts with PPM1K with a 24:1 stoichiometry; the N-terminal region (residues 49-61) of PPM1K and C-terminal linker of the lipoyl domain of DBT/E2 (residues 145-160) are critical for this interaction whereas the lipoyl prosthetic group is dispensable. This interaction requires colocalization in mitochondria. PPM1K competes with BCKDK for binding to DBT; this interaction is modulated by branched-chain alpha-keto acids (BCKAs). At steady state, BCKDH holoenzyme preferentially binds BCKDK and BCKDHA is phosphorylated. In response to high levels of BCKAs, BCKDK is replaced by PPM1K leading to BCKDHA dephosphorylation. The cofactor is (R)-lipoate. Expressed in kidney (at protein level).

The protein localises to the mitochondrion matrix. It carries out the reaction N(6)-[(R)-dihydrolipoyl]-L-lysyl-[protein] + 2-methylpropanoyl-CoA = N(6)-[(R)-S(8)-2-methylpropanoyldihydrolipoyl]-L-lysyl-[protein] + CoA. In terms of biological role, the branched-chain alpha-keto dehydrogenase complex catalyzes the overall conversion of alpha-keto acids to acyl-CoA and CO(2). It contains multiple copies of three enzymatic components: branched-chain alpha-keto acid decarboxylase (E1), lipoamide acyltransferase (E2) and lipoamide dehydrogenase (E3). Within this complex, the catalytic function of this enzyme is to accept, and to transfer to coenzyme A, acyl groups that are generated by the branched-chain alpha-keto acid decarboxylase component. The protein is Lipoamide acyltransferase component of branched-chain alpha-keto acid dehydrogenase complex, mitochondrial (DBT) of Bos taurus (Bovine).